Here is an 897-residue protein sequence, read N- to C-terminus: 3'-5' exonuclease DinG (897 aa).

An Exonuclease domain is found at 8-161 (VVDLETTGNQ…DEDAATTAKL (154 aa)). The 256-residue stretch at 241-496 (SKAVDQLGLT…KAIDQLEKQR (256 aa)) folds into the Helicase ATP-binding domain. 276–283 (ASLGSGKS) is a binding site for ATP. The short motif at 448–451 (DEAH) is the DEAH box element. Positions 703 to 883 (NIDEYVASIV…NYRQKKGDIQ (181 aa)) constitute a Helicase C-terminal domain.

Belongs to the helicase family. DinG subfamily. Type 2 sub-subfamily.

Functionally, 3'-5' exonuclease. In Staphylococcus aureus (strain bovine RF122 / ET3-1), this protein is 3'-5' exonuclease DinG.